The primary structure comprises 430 residues: Glutamate-1-semialdehyde 2,1-aminomutase (430 aa).

At Lys-268 the chain carries N6-(pyridoxal phosphate)lysine.

It belongs to the class-III pyridoxal-phosphate-dependent aminotransferase family. HemL subfamily. Homodimer. The cofactor is pyridoxal 5'-phosphate.

The protein resides in the cytoplasm. It catalyses the reaction (S)-4-amino-5-oxopentanoate = 5-aminolevulinate. It participates in porphyrin-containing compound metabolism; protoporphyrin-IX biosynthesis; 5-aminolevulinate from L-glutamyl-tRNA(Glu): step 2/2. The polypeptide is Glutamate-1-semialdehyde 2,1-aminomutase (hemL) (Bacillus subtilis (strain 168)).